The sequence spans 346 residues: Methylthioribose-1-phosphate isomerase (346 aa).

Residues 48–50 (RGA), Arg91, and Gln196 each bind substrate. The active-site Proton donor is the Asp237. A substrate-binding site is contributed by 247 to 248 (NK).

This sequence belongs to the eIF-2B alpha/beta/delta subunits family. MtnA subfamily.

It carries out the reaction 5-(methylsulfanyl)-alpha-D-ribose 1-phosphate = 5-(methylsulfanyl)-D-ribulose 1-phosphate. Its pathway is amino-acid biosynthesis; L-methionine biosynthesis via salvage pathway; L-methionine from S-methyl-5-thio-alpha-D-ribose 1-phosphate: step 1/6. Catalyzes the interconversion of methylthioribose-1-phosphate (MTR-1-P) into methylthioribulose-1-phosphate (MTRu-1-P). The polypeptide is Methylthioribose-1-phosphate isomerase (Thermosipho africanus (strain TCF52B)).